Here is a 199-residue protein sequence, read N- to C-terminus: Chaperone protein TorD (199 aa).

This sequence belongs to the TorD/DmsD family. TorD subfamily.

It is found in the cytoplasm. Functionally, involved in the biogenesis of TorA. Acts on TorA before the insertion of the molybdenum cofactor and, as a result, probably favors a conformation of the apoenzyme that is competent for acquiring the cofactor. This chain is Chaperone protein TorD, found in Actinobacillus pleuropneumoniae serotype 3 (strain JL03).